A 480-amino-acid polypeptide reads, in one-letter code: UDP-N-acetylmuramoyl-L-alanyl-D-glutamate--2,6-diaminopimelate ligase (480 aa).

Serine 21 is a binding site for UDP-N-acetyl-alpha-D-muramoyl-L-alanyl-D-glutamate. Residue 98-104 (GTNGKSS) coordinates ATP. Residues 144-145 (TT), serine 171, glutamine 177, and arginine 179 contribute to the UDP-N-acetyl-alpha-D-muramoyl-L-alanyl-D-glutamate site. Lysine 211 carries the post-translational modification N6-carboxylysine. Meso-2,6-diaminopimelate is bound by residues arginine 372, 396–399 (DNPR), glycine 446, and glutamate 450. The Meso-diaminopimelate recognition motif signature appears at 396 to 399 (DNPR).

Belongs to the MurCDEF family. MurE subfamily. It depends on Mg(2+) as a cofactor. In terms of processing, carboxylation is probably crucial for Mg(2+) binding and, consequently, for the gamma-phosphate positioning of ATP.

Its subcellular location is the cytoplasm. It catalyses the reaction UDP-N-acetyl-alpha-D-muramoyl-L-alanyl-D-glutamate + meso-2,6-diaminopimelate + ATP = UDP-N-acetyl-alpha-D-muramoyl-L-alanyl-gamma-D-glutamyl-meso-2,6-diaminopimelate + ADP + phosphate + H(+). The protein operates within cell wall biogenesis; peptidoglycan biosynthesis. Functionally, catalyzes the addition of meso-diaminopimelic acid to the nucleotide precursor UDP-N-acetylmuramoyl-L-alanyl-D-glutamate (UMAG) in the biosynthesis of bacterial cell-wall peptidoglycan. This is UDP-N-acetylmuramoyl-L-alanyl-D-glutamate--2,6-diaminopimelate ligase from Rickettsia prowazekii (strain Madrid E).